The following is a 338-amino-acid chain: Extracellular globin (338 aa).

Positions 1 to 18 (MRSLLLLSIVFFVVTVSA) are cleaved as a signal peptide. Asn-19 is a glycosylation site (N-linked (GlcNAc...) asparagine). Globin domains follow at residues 25–167 (CMKS…KHGR) and 174–316 (CMRS…RHGK). 2 residues coordinate heme b: Gln-82 and His-114. Asn-216 carries an N-linked (GlcNAc...) asparagine glycan. The heme b site is built by Gln-231 and His-263. The segment at 313–338 (RHGKEHHEHKEEHKEEHKEEHKEEQH) is disordered.

It belongs to the globin family. Homooctamer.

It is found in the secreted. The protein resides in the extracellular space. In terms of biological role, has an extremely high oxygen affinity. In a vacuum, it takes several minutes to release its oxygen compared to milliseconds for a normal globin. Could be used as an oxygen scavenger for sterol biosynthesis. The chain is Extracellular globin from Ascaris suum (Pig roundworm).